The sequence spans 401 residues: Chaperone protein DnaJ (401 aa).

The region spanning D4–G69 is the J domain. A CR-type zinc finger spans residues G156 to D237. Positions 169, 172, 185, 188, 211, 214, 225, and 228 each coordinate Zn(2+). CXXCXGXG motif repeat units follow at residues C169 to G176, C185 to G192, C211 to G218, and C225 to G232. The tract at residues A377 to S401 is disordered. Basic and acidic residues predominate over residues N385–S401.

It belongs to the DnaJ family. As to quaternary structure, homodimer. It depends on Zn(2+) as a cofactor.

It localises to the cytoplasm. Its function is as follows. Participates actively in the response to hyperosmotic and heat shock by preventing the aggregation of stress-denatured proteins and by disaggregating proteins, also in an autonomous, DnaK-independent fashion. Unfolded proteins bind initially to DnaJ; upon interaction with the DnaJ-bound protein, DnaK hydrolyzes its bound ATP, resulting in the formation of a stable complex. GrpE releases ADP from DnaK; ATP binding to DnaK triggers the release of the substrate protein, thus completing the reaction cycle. Several rounds of ATP-dependent interactions between DnaJ, DnaK and GrpE are required for fully efficient folding. Also involved, together with DnaK and GrpE, in the DNA replication of plasmids through activation of initiation proteins. This is Chaperone protein DnaJ from Chlorobium limicola (strain DSM 245 / NBRC 103803 / 6330).